The following is a 337-amino-acid chain: Mitochondrial metalloendopeptidase OMA1 (337 aa).

Over 1–68 (MFLNKYISNY…QPNPRDKRFQ (68 aa)) the chain is Mitochondrial matrix. Residues 69-89 (WIFGALIAGGGVYYFTHLEYV) traverse the membrane as a helical segment. The Mitochondrial intermembrane segment spans residues 90–337 (PISNRRRFND…MLQSFKEVHW (248 aa)). Position 195 (His195) interacts with Zn(2+). The active site involves Glu196. Zn(2+)-binding residues include His199 and Glu250. A disulfide bridge links Cys265 with Cys321.

It belongs to the peptidase M48 family. It depends on Zn(2+) as a cofactor.

Its subcellular location is the mitochondrion inner membrane. With respect to regulation, protease activity is induced in response to various mitochondrial stress. Protease that is part of the quality control system in the inner membrane of mitochondria. Cleaves and thereby promotes the turnover of mistranslated or misfolded membrane protein. The chain is Mitochondrial metalloendopeptidase OMA1 from Schizosaccharomyces pombe (strain 972 / ATCC 24843) (Fission yeast).